A 1129-amino-acid chain; its full sequence is ISWI chromatin-remodeling complex ATPase ISW1 (1129 aa).

A disordered region spans residues 144–177; the sequence is KANGKGKGKHQDVRRRKTEHEEDAELLKEEDSDD. Basic residues predominate over residues 147 to 160; that stretch reads GKGKGKHQDVRRRK. Residues 164–177 show a composition bias toward acidic residues; it reads EEDAELLKEEDSDD. The region spanning 208 to 373 is the Helicase ATP-binding domain; that stretch reads VSLHKNKIAG…WALLNFLLPD (166 aa). 221 to 228 contacts ATP; sequence DEMGLGKT. A DEAH box motif is present at residues 324 to 327; the sequence is DEAH. The region spanning 506–657 is the Helicase C-terminal domain; sequence VLDKLLKKLK…QLVIQQNRTS (152 aa). Residues 683 to 705 form a disordered region; the sequence is FKSGTSTGSAGTPEPGSGEKGDD. Position 694 is a phosphothreonine (Thr-694). Position 846 is a phosphoserine (Ser-846). 2 SANT domains span residues 882–935 and 988–1052; these read EGFT…SNIE and NKRT…LLQC. The span at 1073–1108 shows a compositional bias: basic and acidic residues; sequence KEDENGKRIREEFADQTANEKENVDGVESKKAKIED. The segment at 1073–1129 is disordered; sequence KEDENGKRIREEFADQTANEKENVDGVESKKAKIEDTSNVGTEQLVAEKIPENETTH.

It belongs to the SNF2/RAD54 helicase family. ISWI subfamily. Component of the ISW1A complex, which at least consists of ISW1 and IOC3. Component of the ISW1B complex, which at least consists of ISW1, IOC2 and IOC4.

Its subcellular location is the nucleus. Its function is as follows. Catalytic component of ISW1-type complexes, which act by remodeling the chromatin by catalyzing an ATP-dependent alteration in the structure of nucleosomal DNA. They are involved in coordinating transcriptional repression, activation and elongation phases. The ISW1A complex represses gene expression at initiation through specific positioning of a promoter proximal dinucleosome. The ISW1B complex acts within coding regions to control the amount of RNA polymerase II released into productive elongation and to coordinate elongation with termination and pre-mRNA processing. This Saccharomyces cerevisiae (strain ATCC 204508 / S288c) (Baker's yeast) protein is ISWI chromatin-remodeling complex ATPase ISW1 (ISW1).